The following is a 167-amino-acid chain: NAD(P)H-quinone oxidoreductase subunit J (167 aa).

This sequence belongs to the complex I 30 kDa subunit family. As to quaternary structure, NDH-1 can be composed of about 15 different subunits; different subcomplexes with different compositions have been identified which probably have different functions.

The protein resides in the cellular thylakoid membrane. The catalysed reaction is a plastoquinone + NADH + (n+1) H(+)(in) = a plastoquinol + NAD(+) + n H(+)(out). It carries out the reaction a plastoquinone + NADPH + (n+1) H(+)(in) = a plastoquinol + NADP(+) + n H(+)(out). Functionally, NDH-1 shuttles electrons from an unknown electron donor, via FMN and iron-sulfur (Fe-S) centers, to quinones in the respiratory and/or the photosynthetic chain. The immediate electron acceptor for the enzyme in this species is believed to be plastoquinone. Couples the redox reaction to proton translocation, and thus conserves the redox energy in a proton gradient. Cyanobacterial NDH-1 also plays a role in inorganic carbon-concentration. The protein is NAD(P)H-quinone oxidoreductase subunit J of Microcystis aeruginosa (strain NIES-843 / IAM M-2473).